A 634-amino-acid polypeptide reads, in one-letter code: DNA gyrase subunit B (634 aa).

In terms of domain architecture, Toprim spans 416-530 (REIYIVEGDS…NGHVYIAMPP (115 aa)). The Mg(2+) site is built by E422, D495, and D497.

Belongs to the type II topoisomerase GyrB family. In terms of assembly, heterotetramer, composed of two GyrA and two GyrB chains. In the heterotetramer, GyrA contains the active site tyrosine that forms a transient covalent intermediate with DNA, while GyrB binds cofactors and catalyzes ATP hydrolysis. Mg(2+) serves as cofactor. It depends on Mn(2+) as a cofactor. Requires Ca(2+) as cofactor.

It localises to the cytoplasm. The catalysed reaction is ATP-dependent breakage, passage and rejoining of double-stranded DNA.. Its function is as follows. A type II topoisomerase that negatively supercoils closed circular double-stranded (ds) DNA in an ATP-dependent manner to modulate DNA topology and maintain chromosomes in an underwound state. Negative supercoiling favors strand separation, and DNA replication, transcription, recombination and repair, all of which involve strand separation. Also able to catalyze the interconversion of other topological isomers of dsDNA rings, including catenanes and knotted rings. Type II topoisomerases break and join 2 DNA strands simultaneously in an ATP-dependent manner. This Borrelia hermsii protein is DNA gyrase subunit B.